A 392-amino-acid polypeptide reads, in one-letter code: Zinc finger protein CONSTANS-LIKE 7 (392 aa).

The Zn(2+) site is built by cysteine 22, cysteine 25, cysteine 46, and histidine 51. The B box-type; atypical zinc finger occupies 22 to 65; that stretch reads CDACMKRSRASWYCPADDAFLCQSCDASIHSANHLAKRHERVRL. A coiled-coil region spans residues 226–254; the sequence is KEENKVGFEINCKDLKRVKDEDEEEEEAK. Disordered stretches follow at residues 246 to 271 and 326 to 346; these read EDEEEEEAKCENGGSKDSDREASNDK and SDGSVTRQQGRDGGGSDGERE. A compositionally biased stretch (basic and acidic residues) spans 259–271; sequence GSKDSDREASNDK. Residues 345–387 form the CCT domain; that stretch reads REARVLRYKEKRRTRLFSKKIRYEVRKLNAEQRPRIKGRFVKR.

It belongs to the CONSTANS family.

It is found in the nucleus. This Arabidopsis thaliana (Mouse-ear cress) protein is Zinc finger protein CONSTANS-LIKE 7 (COL7).